The primary structure comprises 379 residues: uncharacterized protein (379 aa).

Residues tyrosine 9 to alanine 26 form a helical membrane-spanning segment.

To A.liquefaciens L-sorbosone dehydrogenase.

Its subcellular location is the membrane. This is an uncharacterized protein from Borreliella burgdorferi (strain ATCC 35210 / DSM 4680 / CIP 102532 / B31) (Borrelia burgdorferi).